The chain runs to 226 residues: UPF0758 protein SPD_0975 (226 aa).

In terms of domain architecture, MPN spans 103-225 (SILSSQKLAK…YFSYREKTDL (123 aa)). His174, His176, and Asp187 together coordinate Zn(2+). The JAMM motif motif lies at 174-187 (HNHPSGAVAPSQND).

Belongs to the UPF0758 family.

This Streptococcus pneumoniae serotype 2 (strain D39 / NCTC 7466) protein is UPF0758 protein SPD_0975.